A 197-amino-acid polypeptide reads, in one-letter code: Recombination protein RecR (197 aa).

The segment at 56–71 (CQQCRTLTEQALCNIC) adopts a C4-type zinc-finger fold. In terms of domain architecture, Toprim spans 79–174 (KELCIVETPA…KVSRIAHGIP (96 aa)).

It belongs to the RecR family.

May play a role in DNA repair. It seems to be involved in an RecBC-independent recombinational process of DNA repair. It may act with RecF and RecO. This is Recombination protein RecR from Saccharophagus degradans (strain 2-40 / ATCC 43961 / DSM 17024).